Consider the following 90-residue polypeptide: Antitoxin epsilon (90 aa).

It belongs to the epsilon antitoxin family. As to quaternary structure, in the presence of the zeta toxin, forms an inactive PezA(2)PezT(2) heterotetramer.

Its function is as follows. Antitoxin component of a type II toxin-antitoxin (TA) system. Neutralizes the toxic effect of cognate zeta toxin. Part of a postsegregational killing (PSK) system involved in the killing of plasmid-free cells. Continuous synthesis of the epsilon antitoxin is required to counteract the zeta toxin. This Streptococcus agalactiae protein is Antitoxin epsilon.